Consider the following 321-residue polypeptide: Peptide transport system permease protein SapB (321 aa).

At 1–8 the chain is on the cytoplasmic side; that stretch reads MIIFTLRR. The helical transmembrane segment at 9–29 threads the bilayer; sequence LLLLLVTLFFLTFIGFSLSYF. The Periplasmic portion of the chain corresponds to 30 to 80; it reads TPHAPLQGASLWNAWVFWFNGLLHWDFGVSSINGQLISEQLKEVFPATMEL. In terms of domain architecture, ABC transmembrane type-1 spans 74-302; that stretch reads FPATMELCIL…SLVIVVNVIS (229 aa). Residues 81 to 101 form a helical membrane-spanning segment; the sequence is CILAFGFALMVGIPVGMLAGV. Residues 102–113 lie on the Cytoplasmic side of the membrane; the sequence is TRSKWPDRFISA. A helical transmembrane segment spans residues 114–134; it reads LALLGFSIPVFWLALLLTLFF. At 135–174 the chain is on the periplasmic side; that stretch reads SLTLGWLPVSGRFDLLYEVKPVTGFAIIDAWISDSPWRDE. A helical transmembrane segment spans residues 175–195; it reads MVMSAIRHMVLPVLTLSVAPT. At 196–248 the chain is on the cytoplasmic side; it reads TEVIRLMRISTIEVYDQNYVKAAATRGLSRFTILRRHVLHNALPPVIPRLGLQ. The helical transmembrane segment at 249–269 threads the bilayer; sequence FSTMLTLAMITEMVFSWPGLG. The Periplasmic portion of the chain corresponds to 270 to 280; sequence RWLIHAIRQQD. A helical transmembrane segment spans residues 281–301; that stretch reads YAAISAGVMVIGSLVIVVNVI. Residues 302–321 are Cytoplasmic-facing; that stretch reads SDILGAMANPLKHKEWYALR.

The protein belongs to the binding-protein-dependent transport system permease family. OppBC subfamily.

It is found in the cell inner membrane. Functionally, involved in a peptide intake transport system that plays a role in the resistance to antimicrobial peptides. The protein is Peptide transport system permease protein SapB of Salmonella typhimurium (strain LT2 / SGSC1412 / ATCC 700720).